A 355-amino-acid chain; its full sequence is S-adenosylmethionine:tRNA ribosyltransferase-isomerase (355 aa).

The protein belongs to the QueA family. Monomer.

The protein resides in the cytoplasm. The enzyme catalyses 7-aminomethyl-7-carbaguanosine(34) in tRNA + S-adenosyl-L-methionine = epoxyqueuosine(34) in tRNA + adenine + L-methionine + 2 H(+). It participates in tRNA modification; tRNA-queuosine biosynthesis. In terms of biological role, transfers and isomerizes the ribose moiety from AdoMet to the 7-aminomethyl group of 7-deazaguanine (preQ1-tRNA) to give epoxyqueuosine (oQ-tRNA). This is S-adenosylmethionine:tRNA ribosyltransferase-isomerase from Jannaschia sp. (strain CCS1).